The following is a 112-amino-acid chain: uncharacterized protein (112 aa).

Residues 1-29 form the signal peptide; the sequence is MINLHRLCIIHVVATLLSTLLSLISVAIS. Asn-84 carries N-linked (GlcNAc...) asparagine glycosylation. Residues 84 to 112 are disordered; the sequence is NLSKGYNQRPEGSKEESHMVVKEKRKGDH. A compositionally biased stretch (basic and acidic residues) spans 94 to 112; sequence EGSKEESHMVVKEKRKGDH.

The protein resides in the secreted. This is an uncharacterized protein from Homo sapiens (Human).